The primary structure comprises 55 residues: ATP synthase F(0) complex subunit 8 (55 aa).

A helical transmembrane segment spans residues 7–24 (SPWFFIMLTTWLTFSLII).

Belongs to the ATPase protein 8 family. In terms of assembly, component of the ATP synthase complex composed at least of ATP5F1A/subunit alpha, ATP5F1B/subunit beta, ATP5MC1/subunit c (homooctomer), MT-ATP6/subunit a, MT-ATP8/subunit 8, ATP5ME/subunit e, ATP5MF/subunit f, ATP5MG/subunit g, ATP5MK/subunit k, ATP5MJ/subunit j, ATP5F1C/subunit gamma, ATP5F1D/subunit delta, ATP5F1E/subunit epsilon, ATP5PF/subunit F6, ATP5PB/subunit b, ATP5PD/subunit d, ATP5PO/subunit OSCP. ATP synthase complex consists of a soluble F(1) head domain (subunits alpha(3) and beta(3)) - the catalytic core - and a membrane F(0) domain - the membrane proton channel (subunits c, a, 8, e, f, g, k and j). These two domains are linked by a central stalk (subunits gamma, delta, and epsilon) rotating inside the F1 region and a stationary peripheral stalk (subunits F6, b, d, and OSCP).

It localises to the mitochondrion membrane. In terms of biological role, subunit 8, of the mitochondrial membrane ATP synthase complex (F(1)F(0) ATP synthase or Complex V) that produces ATP from ADP in the presence of a proton gradient across the membrane which is generated by electron transport complexes of the respiratory chain. ATP synthase complex consist of a soluble F(1) head domain - the catalytic core - and a membrane F(1) domain - the membrane proton channel. These two domains are linked by a central stalk rotating inside the F(1) region and a stationary peripheral stalk. During catalysis, ATP synthesis in the catalytic domain of F(1) is coupled via a rotary mechanism of the central stalk subunits to proton translocation. In vivo, can only synthesize ATP although its ATP hydrolase activity can be activated artificially in vitro. Part of the complex F(0) domain. The chain is ATP synthase F(0) complex subunit 8 from Columbina passerina (Common ground-dove).